Reading from the N-terminus, the 196-residue chain is Nucleoid occlusion factor SlmA (196 aa).

Residues 7-68 (SNRREEILQA…GLIEFIEEAL (62 aa)) form the HTH tetR-type domain. Positions 31–50 (TTVKLAKQVGVSEAALYRHF) form a DNA-binding region, H-T-H motif. A coiled-coil region spans residues 65-142 (EEALMSRINR…QLRQILRERK (78 aa)).

The protein belongs to the nucleoid occlusion factor SlmA family. As to quaternary structure, homodimer. Interacts with FtsZ.

The protein resides in the cytoplasm. Its subcellular location is the nucleoid. Its function is as follows. Required for nucleoid occlusion (NO) phenomenon, which prevents Z-ring formation and cell division over the nucleoid. Acts as a DNA-associated cell division inhibitor that binds simultaneously chromosomal DNA and FtsZ, and disrupts the assembly of FtsZ polymers. SlmA-DNA-binding sequences (SBS) are dispersed on non-Ter regions of the chromosome, preventing FtsZ polymerization at these regions. This is Nucleoid occlusion factor SlmA from Vibrio atlanticus (strain LGP32) (Vibrio splendidus (strain Mel32)).